Reading from the N-terminus, the 151-residue chain is Transcriptional repressor NrdR (151 aa).

The segment at 3-34 (CPFCGYSESKVVDSRSTEDNMAIRRRRECLEC) is a zinc-finger region. The ATP-cone domain occupies 49–139 (ILVIKKDSSR…VYRQFKDINT (91 aa)).

This sequence belongs to the NrdR family. Requires Zn(2+) as cofactor.

Its function is as follows. Negatively regulates transcription of bacterial ribonucleotide reductase nrd genes and operons by binding to NrdR-boxes. The chain is Transcriptional repressor NrdR from Clostridium acetobutylicum (strain ATCC 824 / DSM 792 / JCM 1419 / IAM 19013 / LMG 5710 / NBRC 13948 / NRRL B-527 / VKM B-1787 / 2291 / W).